A 477-amino-acid polypeptide reads, in one-letter code: UDP-glycosyltransferase 71K1 (477 aa).

UDP-alpha-D-glucose contacts are provided by residues serine 285, 350–351 (WA), 368–376 (HCGWNSILE), and 390–393 (YAEQ).

The protein belongs to the UDP-glycosyltransferase family.

Glycosyltransferase that possesses chalcone and flavonol 2'-O-glycosyltransferase activity. Converts phloretin to phlorizin (phloretin 2'-O-glucoside), a potent antioxidant. Possesses glycosyltransferase activity toward quercetin, isoliquiritigenin, butein and caffeic acid. The protein is UDP-glycosyltransferase 71K1 of Malus domestica (Apple).